A 3902-amino-acid chain; its full sequence is Hybrid PKS-NRPS synthetase pynA (3902 aa).

Residues 1–25 form a disordered region; it reads MDTPLSSSEISPRFSNTVPSSVSSM. The 413-residue stretch at 29–441 folds into the Ketosynthase family 3 (KS3) domain; the sequence is ADPSVIVGLA…GTNAHVILDA (413 aa). Catalysis depends on for beta-ketoacyl synthase activity residues C201, H324, and H362. The malonyl-CoA:ACP transacylase (MAT) domain stretch occupies residues 555–868; sequence VFTGQGAQWF…PYLASLTRGV (314 aa). Residue S647 is the For malonyltransferase activity of the active site. Positions 945 to 1080 are N-terminal hotdog fold; the sequence is HSILGARMPG…GLVSVETNAL (136 aa). A dehydratase (DH) domain region spans residues 945 to 1256; that stretch reads HSILGARMPG…LEVTALGSDK (312 aa). Positions 945-1258 constitute a PKS/mFAS DH domain; the sequence is HSILGARMPG…VTALGSDKTD (314 aa). H977 acts as the Proton acceptor; for dehydratase activity in catalysis. Residues 1100 to 1258 form a C-terminal hotdog fold region; it reads QESIPAETLY…VTALGSDKTD (159 aa). D1164 serves as the catalytic Proton donor; for dehydratase activity. The interval 1629-1945 is enoyl reductase (ER) domain; that stretch reads GLLETLVFED…MGKHTGKVVL (317 aa). A ketoreductase (KR) domain region spans residues 1971-2143; sequence TYLLVGGLGG…AGTTMNCGMI (173 aa). In terms of domain architecture, Carrier 1 spans 2251–2328; that stretch reads ERTTLVLSAF…ALVTKASGLI (78 aa). O-(pantetheine 4'-phosphoryl)serine is present on S2288. Residues 2337–2350 show a composition bias toward basic and acidic residues; that stretch reads KAENVDNEGAKGNE. Residues 2337–2364 are disordered; it reads KAENVDNEGAKGNEDQEVETQQGQLNQP. Residues 2374-2816 are condensation (C) domain 7; that stretch reads VPMSSFQQRL…AEVNLCGALE (443 aa). Residues 2836–3248 are adenylation (A) domain 8; sequence SVGVCQRIME…NGLLTFKGRI (413 aa). Residues 3391-3467 form the Carrier 2 domain; the sequence is GDDAEILQGV…AIAGMIQKQL (77 aa). An O-(pantetheine 4'-phosphoryl)serine modification is found at S3427. Residues 3515–3774 form a thioesterase (TE) domain region; the sequence is LTGIDTFIGL…VDFLPVDALT (260 aa).

This sequence in the C-terminal section; belongs to the NRP synthetase family.

Its pathway is secondary metabolite biosynthesis. In terms of biological role, hybrid PKS-NRPS synthetase; part of the gene cluster that mediates the biosynthesis of pyranonigrins, a family of antioxidative compounds. The first step of pyranonigrins biosynthesis is performed by the hybrid PKS-NRPS synthetase that condenses 6 malonyl-CoA units to an acetyl starter unit, to form a 1,3,5-trioxotetradecane-6,8-dienyl-ACP. The enoyl reductase (ER) domain of pynA is likely to be functional during the first two rounds of polyketide chain extension, to generate the saturated C-C bonds of the alkyl side chain. PynA subsequently forms the amide bond between the acyl chain and L-serine. Although pynA has a terminal reductase domain, it appears to require the thioesterase pynI for the release of the straight-chain intermediate from pynA via the formation of a tetramic acid pyranonigrin J. The methyltransferase pynC then coverts pyranonigrin J to pyranonigrin I via N-methylation. The FAD-dependent monooxygenase pynG catalyzes an epoxidation-mediated cyclization to form the dihydro-gamma-pyrone moiety, followed by pynD-catalyzed oxidation of the alcohol to the ketone and enolization to yield the characteristic tetramic acid-fused gamma-pyrone core of pyranonigrin H. Pyranonigrin H is substrate of pynH for dehydration-mediated exo-methylene formation from the serine side chain to produce pyranonigrin E, before the oxidase pynE reduces the exo-methylene of pyranonigrin E into a pendant methyl to form pyranonigrin G. The FAD-linked oxidoreductase pynB performs the reverse reaction and converts pyranonigrin G back to pyranonigrin E. This chain is Hybrid PKS-NRPS synthetase pynA, found in Aspergillus niger (strain ATCC MYA-4892 / CBS 513.88 / FGSC A1513).